The primary structure comprises 179 residues: Cell division protein ZapC (179 aa).

This sequence belongs to the ZapC family. In terms of assembly, interacts directly with FtsZ.

It is found in the cytoplasm. Contributes to the efficiency of the cell division process by stabilizing the polymeric form of the cell division protein FtsZ. Acts by promoting interactions between FtsZ protofilaments and suppressing the GTPase activity of FtsZ. This chain is Cell division protein ZapC, found in Aliivibrio salmonicida (strain LFI1238) (Vibrio salmonicida (strain LFI1238)).